Reading from the N-terminus, the 833-residue chain is Capsid-associated protein Vp91 (833 aa).

A signal peptide spans 1–18 (MSGVVLLVLAIILITIFS). Asn137, Asn180, Asn199, and Asn210 each carry an N-linked (GlcNAc...) asparagine; by host glycan. The C2HC BV-type zinc-finger motif lies at 147 to 196 (CVPEDPCSGRPPGRYPMNELLLDTLVHNQHSDKNYSAGAHLYHPTLYLRC). 2 cysteine pairs are disulfide-bonded: Cys207–Cys220 and Cys260–Cys273. One can recognise a Chitin-binding type-2 domain in the interval 223-281 (NELCEGRPDGFVLPYFPEALLVNEFVECRNGEHVVAQCADGQVFDRALMTCVHAHPCAF). N-linked (GlcNAc...) asparagine; by host glycans are attached at residues Asn408, Asn413, Asn588, and Asn609. Residues 647-673 (EPGGDGDHWAPEVPPTQPEPELEPESE) are disordered.

Its subcellular location is the virion. Probable capsid-associated protein. This Choristoneura fumiferana nuclear polyhedrosis virus (CfMNPV) protein is Capsid-associated protein Vp91.